The chain runs to 299 residues: F-actin-capping protein subunit alpha-3 (299 aa).

A phosphoserine mark is found at Ser-2 and Ser-290.

Belongs to the F-actin-capping protein alpha subunit family. As to quaternary structure, component of the F-actin capping complex, composed of a heterodimer of an alpha and a beta subunit. Component of the WASH complex, composed of F-actin-capping protein subunit alpha (CAPZA1, CAPZA2 or CAPZA3), F-actin-capping protein subunit beta (CAPZB), WASHC1, WASHC2, WASHC3, WASHC4 and WASHC5. In terms of tissue distribution, exclusively expressed in the testis.

It is found in the cytoplasm. The protein resides in the cytoskeleton. F-actin-capping proteins bind in a Ca(2+)-independent manner to the fast growing ends of actin filaments (barbed end) thereby blocking the exchange of subunits at these ends. Unlike other capping proteins (such as gelsolin and severin), these proteins do not sever actin filaments. May play a role in the morphogenesis of spermatid. In Mus musculus (Mouse), this protein is F-actin-capping protein subunit alpha-3 (Capza3).